Here is a 143-residue protein sequence, read N- to C-terminus: Protein SLC31A2 (143 aa).

Residues 1–22 (MAMHFIFSDTAVLLFDFWSVHS) are Extracellular-facing. Residues 23-43 (PAGMALSVLVLLLLAVLYEGI) traverse the membrane as a helical segment. The Cytoplasmic portion of the chain corresponds to 44 to 93 (KVGKAKLLNQVLVNLPTSISQQTIAETDGDSAGSDSFPVGRTHHRWYLCH). The residue at position 77 (S77) is a Phosphoserine. Residues 94-114 (FGQSLIHVIQVVIGYFIMLAV) form a helical membrane-spanning segment. Topologically, residues 115-119 (MSYNT) are extracellular. Residues 120 to 140 (WIFLGVVLGSAVGYYLAYPLL) form a helical membrane-spanning segment. Residues 141-143 (STA) lie on the Cytoplasmic side of the membrane.

The protein belongs to the copper transporter (Ctr) (TC 1.A.56) family. SLC31A subfamily. As to quaternary structure, oligomer. Interacts with SLC31A1; this interaction stabilizes SLC31A2 and protects it from ubiquitination and the subsequent degradation. In terms of processing, ubiquitinated; ubiquitination and the subsequent proteasomal degradation are prevent by SLC31A1 that stabilizes it. In terms of tissue distribution, ubiquitous with high expression in placenta and heart.

The protein resides in the membrane. It is found in the cytoplasmic vesicle membrane. It localises to the late endosome membrane. The protein localises to the lysosome membrane. Its function is as follows. Does not function as a copper(1+) importer in vivo. However, in vitro functions as a low-affinity copper(1+) importer. Regulator of SLC31A1 which facilitates the cleavage of the SLC31A1 ecto-domain or which stabilizes the truncated form of SLC31A1 (Truncated CTR1 form), thereby drives the SLC31A1 truncated form-dependent endosomal copper export and modulates the copper and cisplatin accumulation via SLC31A1. This chain is Protein SLC31A2, found in Homo sapiens (Human).